A 1241-amino-acid chain; its full sequence is MAAQLEQFLVNEGQVDQRAVTYMLKGLQLESLSDFASFWTSKDYENGVRDDIISKVAPFNSDLSLPAAKLQVARLRAAWRKAQGKPSAAVPLQSAKPVAGSVVTATKDTGFCEKTGLESGGVAHGGALNAAQVAHLDEDAFKGGLHRPKFDSEGLHKPHTSGGKTYETGFHYLLEAHELGGKNADGGFGGPLCADPFSPEIEQLCQALVREAQDDKTLCFENFTKPCPQLTKKQVELCKGFDYGDKTLKLPCGPLPWPAGLPEPGYVPKTNPLHGRWITVSGGQAAFIKEAIKAGMLGAAESHKIMADTDHHQTGGMYLRINQNGDVCTVDASVAKFARAKRTWKSGHYFYEPLVSGGNLLGVWVLPEEYRKIGFFWEMESGRCFRIERRAFERNGLMIMRQATEVAGKISFVFYVKVSNDPESKPIPLQSRDYTALAGLDNVPDSLGNPYTCEAKDLDYPIKRDTWLDKNQEEMLKQRSIVGTAFAKCCDQGFEAHDNPKGGALTAAHVESLGKENFKNGLHAPNFHDDGLHKPMEAGGKVYSTGFHYLLEAHDLGGKNEDGGYGGPLCKDPYGKEVQSMVENLLVQANVDTTNAFDNFKQPCPQLTKEQVAMCKGFDYGDKTLKLPCGPLPWPAGLPEPGYVPKTNPLHGRWITVSGGQVAFIKEAIKSGMLGAAEAKKIIADTDHHQTGGMYLRINQYGEVCTVDASVAKFARAKRTWKSGHYFYEPLVSGGNLLGVWVLPEEYRKIGFFWEMESGHCFRIERRAFPCGPYMFLRQATEVGGKISYVFYVKVSNDPGSKPIPLQSRDYTALAGQDNAPDNLGKPYKCTARDLDAPTKRDGWLDTNKGAMLDQREKVSKAFAKVCEKGFEAGDNKLGGALNAKHVEKYGDNFKNGMHKPEFHEDGLHKPMEVGGKKFESGFHYLLECHELGGKNASGGYGGPLCEDPYGSEVQAMTEKLLKEADSDRTLCFNNFQDPCPQLTKEQVAMCKGFDYGDKTLKLPCGPLPWPAGLPEPGYVPKTNPLHGRWITVSGGQAAFIKEAIKSGMLGAAEANKIVADTDHHQTGGMYLRINQFGDVCTVDASVAKFARAKRTWKSGHYFYEPLVSGGNLLGVWVLPEEYRKIGFFWEMESGRCFRIERRAFPVGPYTFMRQATEVGGKISFVFYVKVSNDPESDPIPLQSRDYTALAGRDNAPTNLGKPYPTLAKDLDYPKKRDGWLEKNEKEMLRQRNIVSSTFRS.

3 luciferase regions span residues 114 to 465 (KTGL…IKRD), 491 to 842 (DQGF…TKRD), and 868 to 1218 (EKGF…KKRD).

This sequence belongs to the calycin superfamily. Luciferase family.

It localises to the cytoplasmic vesicle. It catalyses the reaction dinoflagellate luciferin + O2 = oxidized dinoflagellate luciferin + hnu + H2O + H(+). Its activity is regulated as follows. Regulated by pH: upon acidification, at a pH of 6.3, dinoflagellate luciferin is released from luciferin-binding protein LBP, allowing the interaction between Dinoflagellate luciferase and its substrate luciferin. In terms of biological role, emits blue light flashes with a wavelength of 475 nm during the night phase. The protein is Dinoflagellate luciferase of Lingulodinium polyedra (Dinoflagellate).